The chain runs to 147 residues: Large ribosomal subunit protein uL15 (147 aa).

Residues 16 to 63 are disordered; the sequence is SSRARVGRGIGSGLGKTAGRGHKGSFARKGGGKIKPGFEGGQTPMQRR. The span at 23 to 33 shows a compositional bias: gly residues; the sequence is RGIGSGLGKTA. The segment covering 34–47 has biased composition (basic residues); sequence GRGHKGSFARKGGG.

The protein belongs to the universal ribosomal protein uL15 family. As to quaternary structure, part of the 50S ribosomal subunit.

Binds to the 23S rRNA. This is Large ribosomal subunit protein uL15 from Xylella fastidiosa (strain Temecula1 / ATCC 700964).